The sequence spans 169 residues: Cell division inhibitor SulA (169 aa).

Positions 106–112 are ftsZ binding; sequence ALRTGNY. The interval 162–169 is lon protease binding; it reads KIHSNLYH.

It belongs to the SulA family. Interacts with FtsZ. Is rapidly cleaved and degraded by the Lon protease once DNA damage is repaired.

Component of the SOS system and an inhibitor of cell division. Accumulation of SulA causes rapid cessation of cell division and the appearance of long, non-septate filaments. In the presence of GTP, binds a polymerization-competent form of FtsZ in a 1:1 ratio, thus inhibiting FtsZ polymerization and therefore preventing it from participating in the assembly of the Z ring. This mechanism prevents the premature segregation of damaged DNA to daughter cells during cell division. The chain is Cell division inhibitor SulA from Shigella boydii serotype 18 (strain CDC 3083-94 / BS512).